Consider the following 147-residue polypeptide: Large ribosomal subunit protein bL9 (147 aa).

Belongs to the bacterial ribosomal protein bL9 family.

Binds to the 23S rRNA. This is Large ribosomal subunit protein bL9 from Myxococcus xanthus (strain DK1622).